A 194-amino-acid chain; its full sequence is uncharacterized protein (194 aa).

It belongs to the mimivirus R457/R459 family.

It localises to the virion. This is an uncharacterized protein from Acanthamoeba polyphaga mimivirus (APMV).